The sequence spans 643 residues: Ecto-NOX disulfide-thiol exchanger 1 (643 aa).

The RRM domain maps to Lys-142–Ala-221. 2 coiled-coil regions span residues Val-307–Ile-342 and Gln-425–Gly-521.

Belongs to the ENOX family. The cofactor is Cu cation.

Its subcellular location is the cell membrane. The protein resides in the secreted. The protein localises to the extracellular space. Its activity is regulated as follows. Not inhibited by the antitumor sulfonylurea LY181984, the vabilloid capsaicin, and retinoids. In terms of biological role, probably acts as a terminal oxidase of plasma electron transport from cytosolic NAD(P)H via hydroquinones to acceptors at the cell surface. Hydroquinone oxidase activity alternates with a protein disulfide-thiol interchange/oxidoreductase activity which may control physical membrane displacements associated with vesicle budding or cell enlargement. The activities oscillate with a period length of 24 minutes and play a role in control of the ultradian cellular biological clock. This Mus musculus (Mouse) protein is Ecto-NOX disulfide-thiol exchanger 1 (Enox1).